The sequence spans 414 residues: Nuclear pore complex-interacting protein family member B7 (414 aa).

An N-terminal signal peptide occupies residues 1–18 (MRLRFWLLIWLLLGFISH). A glycan (N-linked (GlcNAc...) asparagine) is linked at Asn-111. Disordered regions lie at residues 242–262 (RMGR…NSLS) and 335–402 (SPLP…LRTR). Positions 252 to 262 (QQHSITDNSLS) are enriched in polar residues. The span at 356–384 (EVEKPPKPKRWRVDEVEQSPKPKRQREAE) shows a compositional bias: basic and acidic residues. The span at 390–402 (KPKRRRLSKLRTR) shows a compositional bias: basic residues.

It belongs to the NPIP family.

The protein localises to the secreted. The chain is Nuclear pore complex-interacting protein family member B7 (NPIPB7) from Homo sapiens (Human).